A 261-amino-acid polypeptide reads, in one-letter code: Thioesterase frbD (261 aa).

This sequence belongs to the AMT4 thioesterase family.

It functions in the pathway antifungal biosynthesis. In terms of biological role, thioesterase; part of the gene cluster that mediates the biosynthesis of the antifungal antibiotic FR901469, an inhibitor of beta-1,3-glucansynthase, exerting antifungal activity against the pathogenes Candida albicans and Aspergillus fumigatus. FR901469 is a cyclic depsipeptide containing 12 amino acid residues and a fatty acid chain. The NRPS frbI contains 12 modules responsible for the formation of the depsipeptide backbone which is denoted as Acyl-Thr-Ala-Tyr-Val-4OHPro-Thr-Thr-3OHPro-threo3OHGln-Gly-Thr-Orn-OH (C71H116N14O23). The PKS frbB is probably involved in the production of the hydrocarbon chain, and the acyl-CoA ligase frbC might be involved in the transport of the chain to the peptide ptoduct of frbI. Because FR901469 contains 3 hydroxylated amino acid residues, the 3 oxygenases frbA, frbH, and frbJ might be participating in amino acid hydroxylation. As no thioesterase domains were detected in frbI or frbB, the thioesterases frbD and frbE may instead release and cyclize the products of the NRPS and PKS, respectively. The chain is Thioesterase frbD from Dothideomycetidae sp. (strain 11243) (Fungal sp. (strain No.11243)).